Here is a 610-residue protein sequence, read N- to C-terminus: MSAVNGLVPSTIFDRINSDMDVSEEMEEIREVLYEMIKTNFPMGVAATHLSEKYHEEFVSKGLGRELPEDWIQQVTAAEEFEAQTRGPITILFVRLSNTSSFKRPPINSVNVRVISTDREPTADELKKIKQRKENEPTEHAKTLSQQSVALKEGSTVSIVYADSPKRFFIRALADDDQYEKIGTTLAEIYAQETPPSALDSRVAIYEIVAGGAYALQDSNGTWFRVIAKQPPQSGQVMCHFVDVGVCEKFPVAAIRLLPPAVHPVMSIGSMAREVRMDVSEEESLRLNNKFVDLTFETKDDGIQVPINLTLSKFDSSDSESLPVVDLQSSDGLSITEFLKKPSGVVRLSTPTKTTSPITPASASTSSLTCLFDKPATIQPMTVAQMPMSAFPANAIFAAGPTDISLRQLSLDPMPDYMYAKLKDECALPDSQLESSPDFGGFYAAFIDDRWERVQCIRASKIDKQAYCVYLLDVGAFQYVRKEAMRRLNSTSPFKKMLMFKCKIGGIKPVAGGEVWSRESHEAVREFFEAACGEPVVVEPTQPGWSQWKQLNAPAVPTCEARLSCCGRDIGDWLIACGLALPINAPIPSPNSQSLLTFVPTPINIVGRNI.

Tudor domains follow at residues 149 to 260 (VALK…LLPP) and 386 to 506 (MPMS…KIGG).

The protein is Putative protein tag-250 (tag-250) of Caenorhabditis elegans.